The sequence spans 153 residues: SsrA-binding protein (153 aa).

A disordered region spans residues 131 to 153 (EYDKRDSIRERDDRREMDRAFKR).

It belongs to the SmpB family.

The protein resides in the cytoplasm. Required for rescue of stalled ribosomes mediated by trans-translation. Binds to transfer-messenger RNA (tmRNA), required for stable association of tmRNA with ribosomes. tmRNA and SmpB together mimic tRNA shape, replacing the anticodon stem-loop with SmpB. tmRNA is encoded by the ssrA gene; the 2 termini fold to resemble tRNA(Ala) and it encodes a 'tag peptide', a short internal open reading frame. During trans-translation Ala-aminoacylated tmRNA acts like a tRNA, entering the A-site of stalled ribosomes, displacing the stalled mRNA. The ribosome then switches to translate the ORF on the tmRNA; the nascent peptide is terminated with the 'tag peptide' encoded by the tmRNA and targeted for degradation. The ribosome is freed to recommence translation, which seems to be the essential function of trans-translation. This Parabacteroides distasonis (strain ATCC 8503 / DSM 20701 / CIP 104284 / JCM 5825 / NCTC 11152) protein is SsrA-binding protein.